We begin with the raw amino-acid sequence, 394 residues long: Na(+)/H(+) antiporter NhaA (394 aa).

The next 11 helical transmembrane spans lie at 14–34, 59–79, 95–115, 125–145, 155–175, 177–197, 204–224, 258–278, 292–312, 328–348, and 362–382; these read AGGILLLIAALLAMLCANSVF, LLMWINDGFMAVFFILVGMEV, IFPAFAAIGGMVVPALIYWFI, GWAIPMATDIAFALGIVALLS, FLLALAIIDDIGAIIVIALFF, NELSMLALIIASIAIMILITM, GIIHYVIVGTILWASVLKSGV, WCAFAILPLFAFSNAGVSLAG, ITLGLLIGKPVGVFSFCYLAV, VFAIAVLCGIGFTMSVFIAGL, and LSRLGILIGTSIAAIVGYILL.

The protein belongs to the NhaA Na(+)/H(+) (TC 2.A.33) antiporter family.

The protein resides in the cell inner membrane. It carries out the reaction Na(+)(in) + 2 H(+)(out) = Na(+)(out) + 2 H(+)(in). Na(+)/H(+) antiporter that extrudes sodium in exchange for external protons. This chain is Na(+)/H(+) antiporter NhaA, found in Haemophilus ducreyi (strain 35000HP / ATCC 700724).